Here is a 611-residue protein sequence, read N- to C-terminus: mRNA export factor GLE1 (611 aa).

Disordered regions lie at residues 69 to 94 (SEDEMESDEGEESDDEEEEEDHSQIC) and 220 to 243 (KIRSEEAQEEARRKERAHQEEKIR). Residues 71–89 (DEMESDEGEESDDEEEEED) show a composition bias toward acidic residues.

The protein belongs to the GLE1 family. In terms of assembly, part of the nuclear pore complex (NPC). The NPC has an eight-fold symmetrical structure comprising a central transport channel and two rings, the cytoplasmic and nuclear rings, to which eight filaments are attached. The cytoplasmic filaments have loose ends, while the nuclear filaments are joined in a distal ring, forming a nuclear basket. NPCs are highly dynamic in configuration and composition, and can be devided in 3 subcomplexes, the NUP62 subcomplex, the NUP107-160 subcomplex and the NUP93 subcomplex, containing approximately 30 different nucleoporin proteins.

It localises to the nucleus envelope. It is found in the nucleus. The protein resides in the nuclear pore complex. Its function is as follows. Required for seed viability. In Arabidopsis thaliana (Mouse-ear cress), this protein is mRNA export factor GLE1.